The sequence spans 350 residues: Kelch domain-containing protein 8A (350 aa).

Kelch repeat units follow at residues 1 to 31, 32 to 79, 81 to 127, 128 to 175, 176 to 222, 224 to 278, and 279 to 326; these read MEVPNVKDFQWKRLAPLPSRRVYCSLLETGG, QVYA…ALGK, IMVI…AKDY, RVYA…LRGS, KIYV…TLDN, LYSL…GLSG, and RVIV…VFKN.

The chain is Kelch domain-containing protein 8A (Klhdc8a) from Mus musculus (Mouse).